Consider the following 292-residue polypeptide: MTNLLENTNLLTAIITPFDKNNRIDFQVYRRLIDSQISDGVKGFVISGTTGEAPTLSHDEKIELFKRTVDFVSGRAKVIVGTGSNNTKETIEFTKEAGRINGIDAALIVTPYYNKPDQAGMIAHFSTIADESPLPIVIYNIPGRSISALTVESLLKLADHPNIIAVKQCNSDYDMSELIEHAPKDFLVYTGEDGQSFLNYALGGAGTISVASHFYAKEFADMFSAIDNGDFKKAAGDFRFINPRVKALFSYPSPAPVKAVFKRSGIDVGIPRLPILPLDKAQTDGIMQVLKL.

Thr-50 contributes to the pyruvate binding site. The active-site Proton donor/acceptor is Tyr-139. The active-site Schiff-base intermediate with substrate is Lys-167. Ile-208 is a binding site for pyruvate.

Belongs to the DapA family. Homotetramer; dimer of dimers.

It is found in the cytoplasm. The enzyme catalyses L-aspartate 4-semialdehyde + pyruvate = (2S,4S)-4-hydroxy-2,3,4,5-tetrahydrodipicolinate + H2O + H(+). It functions in the pathway amino-acid biosynthesis; L-lysine biosynthesis via DAP pathway; (S)-tetrahydrodipicolinate from L-aspartate: step 3/4. Catalyzes the condensation of (S)-aspartate-beta-semialdehyde [(S)-ASA] and pyruvate to 4-hydroxy-tetrahydrodipicolinate (HTPA). This chain is 4-hydroxy-tetrahydrodipicolinate synthase, found in Oenococcus oeni (strain ATCC BAA-331 / PSU-1).